Consider the following 417-residue polypeptide: UDP-N-acetylglucosamine 1-carboxyvinyltransferase (417 aa).

22–23 (KN) provides a ligand contact to phosphoenolpyruvate. R92 lines the UDP-N-acetyl-alpha-D-glucosamine pocket. C116 serves as the catalytic Proton donor. At C116 the chain carries 2-(S-cysteinyl)pyruvic acid O-phosphothioketal. Residues 161 to 164 (KVSV), D305, and I327 each bind UDP-N-acetyl-alpha-D-glucosamine.

This sequence belongs to the EPSP synthase family. MurA subfamily.

The protein localises to the cytoplasm. The catalysed reaction is phosphoenolpyruvate + UDP-N-acetyl-alpha-D-glucosamine = UDP-N-acetyl-3-O-(1-carboxyvinyl)-alpha-D-glucosamine + phosphate. It functions in the pathway cell wall biogenesis; peptidoglycan biosynthesis. Its function is as follows. Cell wall formation. Adds enolpyruvyl to UDP-N-acetylglucosamine. This is UDP-N-acetylglucosamine 1-carboxyvinyltransferase from Pelagibacter ubique (strain HTCC1062).